The sequence spans 368 residues: Glutamate 5-kinase 1 (368 aa).

Residue lysine 12 coordinates ATP. Substrate is bound by residues serine 52, aspartate 135, and asparagine 147. Residues 167–168 (SD) and 209–215 (TGGMKTK) each bind ATP. The region spanning 274–348 (QGEVVVDGSF…DNEQSEFSEK (75 aa)) is the PUA domain.

Belongs to the glutamate 5-kinase family.

The protein resides in the cytoplasm. The enzyme catalyses L-glutamate + ATP = L-glutamyl 5-phosphate + ADP. It participates in amino-acid biosynthesis; L-proline biosynthesis; L-glutamate 5-semialdehyde from L-glutamate: step 1/2. Catalyzes the transfer of a phosphate group to glutamate to form L-glutamate 5-phosphate. The polypeptide is Glutamate 5-kinase 1 (Pseudoalteromonas translucida (strain TAC 125)).